A 180-amino-acid chain; its full sequence is ATP synthase subunit delta (180 aa).

Belongs to the ATPase delta chain family. In terms of assembly, F-type ATPases have 2 components, F(1) - the catalytic core - and F(0) - the membrane proton channel. F(1) has five subunits: alpha(3), beta(3), gamma(1), delta(1), epsilon(1). F(0) has three main subunits: a(1), b(2) and c(10-14). The alpha and beta chains form an alternating ring which encloses part of the gamma chain. F(1) is attached to F(0) by a central stalk formed by the gamma and epsilon chains, while a peripheral stalk is formed by the delta and b chains.

The protein resides in the cell inner membrane. F(1)F(0) ATP synthase produces ATP from ADP in the presence of a proton or sodium gradient. F-type ATPases consist of two structural domains, F(1) containing the extramembraneous catalytic core and F(0) containing the membrane proton channel, linked together by a central stalk and a peripheral stalk. During catalysis, ATP synthesis in the catalytic domain of F(1) is coupled via a rotary mechanism of the central stalk subunits to proton translocation. In terms of biological role, this protein is part of the stalk that links CF(0) to CF(1). It either transmits conformational changes from CF(0) to CF(1) or is implicated in proton conduction. The polypeptide is ATP synthase subunit delta (Trichlorobacter lovleyi (strain ATCC BAA-1151 / DSM 17278 / SZ) (Geobacter lovleyi)).